A 324-amino-acid chain; its full sequence is Quinolinate synthase (324 aa).

Positions 39 and 56 each coordinate iminosuccinate. Position 101 (C101) interacts with [4Fe-4S] cluster. Iminosuccinate-binding positions include 127–129 (YIN) and S144. C187 is a [4Fe-4S] cluster binding site. Residues 213–215 (HPE) and T230 each bind iminosuccinate. C280 serves as a coordination point for [4Fe-4S] cluster.

It belongs to the quinolinate synthase family. Type 2 subfamily. [4Fe-4S] cluster is required as a cofactor.

It localises to the cytoplasm. The enzyme catalyses iminosuccinate + dihydroxyacetone phosphate = quinolinate + phosphate + 2 H2O + H(+). It functions in the pathway cofactor biosynthesis; NAD(+) biosynthesis; quinolinate from iminoaspartate: step 1/1. Catalyzes the condensation of iminoaspartate with dihydroxyacetone phosphate to form quinolinate. This chain is Quinolinate synthase, found in Trichormus variabilis (strain ATCC 29413 / PCC 7937) (Anabaena variabilis).